The chain runs to 917 residues: MKIRSRFEEMQSELVPVSMSETEHIASISSDATTEKTSELRDDSCISVSGDESSRLETGAELLSLDSDRILCQTNEHCSQIEVQESHIPDCGSGENSCANTDTCPEDSGQIDDFPGGDFTEQVSKTKEPEQTVTQILAELKSSAPAEAANPKTASASLYDTDCTRKLISEMKTVSASDDLLGEIESELLSAEFAEGHQVPNGLNKGEQALALFEKCVHSRYLQQELTVKQLIKENKNHQELILNICSEKDSLREELRKRTETEKQHMNTIKQLELRIEELNKEIKASKDQLVAQDVTAKNAIQQIHKEMAQRMDQANKKCEEARQEKEAMVMKYVRGEKEALDLRKEKETLERKLRDASKELEKNTNKIKQLSQEKGRLQQLYESKEGETTRLIREIEKLKEEMNSQVIKVKWAQNKLKAEMDSHKETKDKLKETTTKLTQAKEEAEQIRQNCQDMIKTYQESEEIKSNELDAKLRVTKGELEKQMQEKSDQLEMHHAKIKELEDLKRTFKEGMDELRTLRTKAKCLEDERLRTEDELSKYREIINRQKSEIQNLLDKVKITDQLHEQLQSGKQEIEHLKEEMESLNSLINDLQKDIEGSRKRESELLLFTEKLTSKNAQLQSESSALQSQVDNLSCTESQLQSQCQQMGQANRNLESKLLKEEELRKEEVQTLQAELSAAQTEVKALSTQVEELKDELVTQRRKHASNVKDLSKQLQQARRKLEQTENGNHDKDISSMGSRSSSSGSLNARISAEDRSPENTSSSVAVDNFPEVDKAMLIERIVRLQKAHARKNEKIEFMEDHIKQLVEEIRKKTKIIQSYVLREESGTLSSEASDFNKVHLSRRGGIMASLYTSHPADSGLTLELSLEINRKLQAVLEDTLLKNITLKENLQTLGTEIERLIKHQHELEQRTKKA.

Disordered stretches follow at residues methionine 1 to glutamate 52, serine 97 to aspartate 118, and threonine 701 to valine 769. Positions threonine 33–serine 44 are enriched in basic and acidic residues. Residues arginine 220–isoleucine 736 are a coiled coil. Residues arginine 722–isoleucine 736 are compositionally biased toward basic and acidic residues. Residues serine 737–serine 748 are compositionally biased toward low complexity. The residue at position 759 (serine 759) is a Phosphoserine. Coiled coils occupy residues alanine 778–tyrosine 822 and lysine 874–arginine 913.

As to expression, expressed in postnatal germ cells.

This Mus musculus (Mouse) protein is Coiled-coil domain-containing protein 186 (Ccdc186).